The chain runs to 162 residues: Phosphopantetheine adenylyltransferase (162 aa).

Residue S11 participates in substrate binding. Residues S11–F12 and H19 each bind ATP. 3 residues coordinate substrate: K43, V76, and R90. ATP-binding positions include G91 to R93, E101, and H126 to S132.

Belongs to the bacterial CoaD family. In terms of assembly, homohexamer. Requires Mg(2+) as cofactor.

It is found in the cytoplasm. It carries out the reaction (R)-4'-phosphopantetheine + ATP + H(+) = 3'-dephospho-CoA + diphosphate. It functions in the pathway cofactor biosynthesis; coenzyme A biosynthesis; CoA from (R)-pantothenate: step 4/5. Functionally, reversibly transfers an adenylyl group from ATP to 4'-phosphopantetheine, yielding dephospho-CoA (dPCoA) and pyrophosphate. The protein is Phosphopantetheine adenylyltransferase of Streptococcus pneumoniae (strain Hungary19A-6).